The chain runs to 118 residues: Large ribosomal subunit protein uL22 (118 aa).

The protein belongs to the universal ribosomal protein uL22 family. Part of the 50S ribosomal subunit.

This protein binds specifically to 23S rRNA; its binding is stimulated by other ribosomal proteins, e.g. L4, L17, and L20. It is important during the early stages of 50S assembly. It makes multiple contacts with different domains of the 23S rRNA in the assembled 50S subunit and ribosome. Functionally, the globular domain of the protein is located near the polypeptide exit tunnel on the outside of the subunit, while an extended beta-hairpin is found that lines the wall of the exit tunnel in the center of the 70S ribosome. The chain is Large ribosomal subunit protein uL22 from Nostoc punctiforme (strain ATCC 29133 / PCC 73102).